A 610-amino-acid chain; its full sequence is MSDQFDAKAFLKTVTSQPGVYRMYDAGGTVIYVGKAKDLKKRLSSYFRSNLASRKTEALVAQIQQIDVTVTHTETEALLLEHNYIKLYQPRYNVLLRDDKSYPFIFLSGDTHPRLAMHRGAKHAKGEYFGPFPNGYAVRETLALLQKIFPIRQCENSVYRNRSRPCLQYQIGRCLGPCVEGLVSEEEYAQQVEYVRLFLSGKDDQVLTQLISRMETASQNLEFEEAARIRDQIQAVRRVTEKQFVSNTGDDLDVIGVAFDAGMACVHVLFIRQGKVLGSRSYFPKVPGGTELSEVVETFVGQFYLQGSQMRTLPGEILLDFNLSDKTLLADSLSELAGRKINVQTKPRGDRARYLKLARTNAATALTSKLSQQSTVHQRLTALASVLKLPEVKRMECFDISHTMGEQTVASCVVFDANGPLRAEYRRYNITGIRPGDDYAAMNQVLRRRYGKAIDDSKIPDVILIDGGKGQLAQAKNVFAELDVSWDKNHPLLLGVAKGADRKAGLETLFFEPEGEGFSLPPDSPALHVIQHIRDESHDHAIGGHRKKRAKVKNTSSLETIEGVGPKRRQMLLKYMGGLQGLRNASVEEIAKVPGISQGLAEKIFWSLKH.

One can recognise a GIY-YIG domain in the interval 16-94 (SQPGVYRMYD…IKLYQPRYNV (79 aa)). In terms of domain architecture, UVR spans 204–239 (DQVLTQLISRMETASQNLEFEEAARIRDQIQAVRRV).

This sequence belongs to the UvrC family. In terms of assembly, interacts with UvrB in an incision complex.

The protein resides in the cytoplasm. In terms of biological role, the UvrABC repair system catalyzes the recognition and processing of DNA lesions. UvrC both incises the 5' and 3' sides of the lesion. The N-terminal half is responsible for the 3' incision and the C-terminal half is responsible for the 5' incision. The protein is UvrABC system protein C of Escherichia coli (strain SMS-3-5 / SECEC).